Consider the following 473-residue polypeptide: H(+)/Cl(-) exchange transporter ClcA (473 aa).

At 1–32 the chain is on the cytoplasmic side; it reads MKTDTSTFLAQQIVRLRRRDQIRRLMQRDKTP. Residues 33–69 traverse the membrane as a helical segment; it reads LAILFMAAVVGTLTGLVGVAFEKAVSWVQNMRIGALV. Residues 70-76 are Periplasmic-facing; sequence QVADHAF. Residues 77–100 form a helical membrane-spanning segment; the sequence is LLWPLAFILSALLAMVGYFLVRKF. The Selectivity filter part_1 motif lies at 106 to 110; sequence GSGIP. Residue Ser107 coordinates chloride. An intramembrane region (helical) is located at residues 109 to 116; that stretch reads IPEIEGAL. The Cytoplasmic portion of the chain corresponds to 117-123; the sequence is EELRPVR. A run of 2 helical transmembrane segments spans residues 124-141 and 148-166; these read WWRVLPVKFIGGMGTLGA and EGPTVQIGGNLGRMVLDVF. A Selectivity filter part_2 motif is present at residues 146–150; the sequence is GREGP. The Cytoplasmic portion of the chain corresponds to 167 to 176; the sequence is RMRSAEARHT. Intramembrane regions (helical) lie at residues 177–189 and 193–201; these read LLATGAAAGLSAA and PLAGILFII. The Cytoplasmic portion of the chain corresponds to 202–214; that stretch reads EEMRPQFRYNLIS. Residues 215 to 232 form a helical membrane-spanning segment; that stretch reads IKAVFTGVIMSSIVFRIF. Over 233-252 the chain is Periplasmic; sequence NGEAPIIEVGKLSDAPVNTL. A helical membrane pass occupies residues 253-281; it reads WLYLILGIIFGCVGPVFNSLVLRTQDMFQ. At 282-287 the chain is on the cytoplasmic side; that stretch reads RFHGGE. The chain crosses the membrane as a helical span at residues 288 to 309; it reads IKKWVLMGGAIGGLCGILGLIE. The Periplasmic portion of the chain corresponds to 310–329; that stretch reads PEAAGGGFNLIPIAAAGNFS. Transmembrane regions (helical) follow at residues 330 to 349 and 355 to 376; these read VGLLLFIFIARVVTTLLCFS and GIFAPMLALGTLLGTAFGMAAA. The short motif at 355–359 is the Selectivity filter part_3 element; it reads GIFAP. Ile356 and Phe357 together coordinate chloride. The Periplasmic segment spans residues 377–386; the sequence is VLFPQYHLEA. The helical intramembrane region spans 387-401; the sequence is GTFAIAGMGALMAAS. An intramembrane region (note=Loop between two helices) is located at residues 402–404; the sequence is VRA. The segment at residues 405–416 is an intramembrane region (helical); that stretch reads PLTGIVLVLEMT. An intramembrane region (note=Loop between two helices) is located at residues 417–421; sequence DNYQL. A helical membrane pass occupies residues 422 to 438; the sequence is ILPMIITCLGATLLAQF. Topologically, residues 439-473 are cytoplasmic; the sequence is LGGKPLYSTILARTLAKQDAEQAAKNQNAPAGENT. Residue Tyr445 participates in chloride binding.

It belongs to the chloride channel (TC 2.A.49) family. ClcA subfamily. In terms of assembly, homodimer.

Its subcellular location is the cell inner membrane. The catalysed reaction is 2 chloride(in) + H(+)(out) = 2 chloride(out) + H(+)(in). Functionally, proton-coupled chloride transporter. Functions as antiport system and exchanges two chloride ions for 1 proton. Probably acts as an electrical shunt for an outwardly-directed proton pump that is linked to amino acid decarboxylation, as part of the extreme acid resistance (XAR) response. This Salmonella agona (strain SL483) protein is H(+)/Cl(-) exchange transporter ClcA.